A 443-amino-acid chain; its full sequence is MDSLAALYKNHIVTLQERTRDVLTRFKLDALLIHSGELLNVFLDDHAYPFKVNPQFKAWVPVTQVPNCWLLVDGVNKPKLWFYLPVDYWHNVEPLPTTFWTEEVDVIALPKADGIGSQLPAARGNIAYIGPVPERALGLDIPADKINPKGVIDYLHYYRAYKTDYELSCMREAQKTAVNGHQAAHEAFLSGMSEFDINQAYLTATGHRDTDVPYGNIVALNEHASVLHYTKLDHRAPSEIRSFLLDAGAEYNGYAADLTRTWAANSDTDFAHLIKDVNDEQLALISTMKAGTSYVDYHIQFHQRIAKLLRKHQIVTDMSEEAMVENDLTGPFMPHGIGHPLGLQVHDVAGFMQDDTGTHLAAPSKYPYLRCTRVLEPRMVLTIEPGIYFIDSLLNPWREGQFSKHFNWQKIDALKPFGGIRIEDNVVVHENNIENMTRDQKLA.

Residues Asp246, Asp257, His339, Glu384, and Glu423 each contribute to the Mn(2+) site.

Belongs to the peptidase M24B family. Bacterial-type prolidase subfamily. The cofactor is Mn(2+).

It carries out the reaction Xaa-L-Pro dipeptide + H2O = an L-alpha-amino acid + L-proline. Its function is as follows. Splits dipeptides with a prolyl residue in the C-terminal position. The chain is Xaa-Pro dipeptidase from Enterobacter sp. (strain 638).